Reading from the N-terminus, the 142-residue chain is MSQAVNAKKRVFKTHSYRGVDLEKLLEMSTEDFVKLAPARVRRRFARGMTSKPAGFMKKLRAAKLAAPENEKPAPVRTHMRNMIIVPEMIGSVVGIYNGKAFNQVEIRPEMLGHYLGEFSITYTPVRHGRAGATTSRFIPLK.

Residue serine 2 is modified to N-acetylserine. Glycyl lysine isopeptide (Lys-Gly) (interchain with G-Cter in ubiquitin) cross-links involve residues lysine 24, lysine 35, and lysine 64.

It belongs to the universal ribosomal protein uS19 family. As to quaternary structure, component of the small ribosomal subunit (SSU). Mature yeast ribosomes consist of a small (40S) and a large (60S) subunit. The 40S small subunit contains 1 molecule of ribosomal RNA (18S rRNA) and 33 different proteins (encoded by 57 genes). The large 60S subunit contains 3 rRNA molecules (25S, 5.8S and 5S rRNA) and 46 different proteins (encoded by 81 genes).

It is found in the cytoplasm. Component of the ribosome, a large ribonucleoprotein complex responsible for the synthesis of proteins in the cell. The small ribosomal subunit (SSU) binds messenger RNAs (mRNAs) and translates the encoded message by selecting cognate aminoacyl-transfer RNA (tRNA) molecules. The large subunit (LSU) contains the ribosomal catalytic site termed the peptidyl transferase center (PTC), which catalyzes the formation of peptide bonds, thereby polymerizing the amino acids delivered by tRNAs into a polypeptide chain. The nascent polypeptides leave the ribosome through a tunnel in the LSU and interact with protein factors that function in enzymatic processing, targeting, and the membrane insertion of nascent chains at the exit of the ribosomal tunnel. uS19 is involved in the nuclear export of the small ribosomal subunit precursor. Has a role in the late stage of the assembly of pre-40S particles within the nucleus and controls their export to the cytoplasm. The chain is Small ribosomal subunit protein uS19 from Saccharomyces cerevisiae (strain ATCC 204508 / S288c) (Baker's yeast).